We begin with the raw amino-acid sequence, 401 residues long: Inactive leucine-rich repeat receptor-like protein kinase CORYNE (401 aa).

Positions M1–S33 are cleaved as a signal peptide. At T34–V62 the chain is on the extracellular side. Residues I63–F83 traverse the membrane as a helical segment. At L84 to F401 the chain is on the cytoplasmic side. The 284-residue stretch at S118–F401 folds into the Protein kinase domain. ATP contacts are provided by residues L124–Y132 and K146.

It belongs to the protein kinase superfamily. Ser/Thr protein kinase family. As to quaternary structure, self-interacts. Parts of a tetrameric complex made of two CLV2/CRN heterodimers that can interact with CLV3 and CLE peptides. CLV2/CRN heterodimer interacts with CLV1 homodimers. Interacts with CLV1 and CLV2. CLV2/CRN heterodimer can interact with BAM3. As to expression, present in roots, stems, leaves, inflorescence, flowers and siliques. Mostly expressed in shoot tips and, to a lesser extent, in young organs and roots. Also expressed in the inner tissues of the proximal root meristem. Expressed in the vascular cylinder of root tips, mostly in phloem poles.

The protein resides in the cell membrane. It localises to the endoplasmic reticulum membrane. Its function is as follows. Involved in the perception of CLV3 and CLV3-like (CLE) peptides, that act as extracellular signals regulating meristem maintenance. Modulates root, shoot and flower apical meristem maintenance and floral organ development regulation, probably via CLAVATA (CLV)-like pathways involving at least CLV3 and CLE19. In complex with CLV2, perceives secreted CLV3-like effector proteins from plant-parasitic cyst nematodes as ligand mimics of the plant CLE signaling pathway. This recognition is required for proper feeding structure (syncytium) development and ultimately successful nematode infection. CLE14 perception by CLV2/CRN complex triggers root meristem differentiation. Required for the sensing of the root CLE peptides (e.g. CLE8, CLE9/CLE10, CLE11, CLE13, CLE14, CLE16, CLE17, CLE18, CLE20, CLE21, CLE25, CLE26, CLE40, CLE41/CLE44 and CLE45), which also involves CLV2 and leads to root growth regulation, mostly in the phloem and protophloem. Promotes the accumulation of BAM3, especially at later stages of protophloem development. This is Inactive leucine-rich repeat receptor-like protein kinase CORYNE from Arabidopsis thaliana (Mouse-ear cress).